The primary structure comprises 113 residues: U11-theraphotoxin-Hhn1t (113 aa).

Positions 1-21 are cleaved as a signal peptide; it reads MNTVRVTFLLVFVLAVSLGQA. The propeptide occupies 22–74; it reads DKDENRMEMQEKTEQGKSYLDFAENLLLQKLEELEAKLLEEDSEESRNSRQKR. Positions 60–69 are enriched in basic and acidic residues; sequence LEEDSEESRN. The interval 60 to 83 is disordered; sequence LEEDSEESRNSRQKRCIGEGVPCD. 3 disulfide bridges follow: C75-C90, C82-C95, and C89-C110.

It belongs to the neurotoxin 14 (magi-1) family. 01 (HNTX-16) subfamily. As to expression, expressed by the venom gland.

It is found in the secreted. Its function is as follows. Probable ion channel inhibitor. This Cyriopagopus hainanus (Chinese bird spider) protein is U11-theraphotoxin-Hhn1t.